The sequence spans 318 residues: Transaldolase (318 aa).

Catalysis depends on lysine 132, which acts as the Schiff-base intermediate with substrate.

This sequence belongs to the transaldolase family. Type 1 subfamily. Homodimer.

The protein resides in the cytoplasm. The enzyme catalyses D-sedoheptulose 7-phosphate + D-glyceraldehyde 3-phosphate = D-erythrose 4-phosphate + beta-D-fructose 6-phosphate. It participates in carbohydrate degradation; pentose phosphate pathway; D-glyceraldehyde 3-phosphate and beta-D-fructose 6-phosphate from D-ribose 5-phosphate and D-xylulose 5-phosphate (non-oxidative stage): step 2/3. Transaldolase is important for the balance of metabolites in the pentose-phosphate pathway. The polypeptide is Transaldolase (Shewanella pealeana (strain ATCC 700345 / ANG-SQ1)).